The chain runs to 233 residues: Large ribosomal subunit protein uL1 (233 aa).

Belongs to the universal ribosomal protein uL1 family. Part of the 50S ribosomal subunit.

Its function is as follows. Binds directly to 23S rRNA. The L1 stalk is quite mobile in the ribosome, and is involved in E site tRNA release. Functionally, protein L1 is also a translational repressor protein, it controls the translation of the L11 operon by binding to its mRNA. This is Large ribosomal subunit protein uL1 from Polynucleobacter asymbioticus (strain DSM 18221 / CIP 109841 / QLW-P1DMWA-1) (Polynucleobacter necessarius subsp. asymbioticus).